Here is a 457-residue protein sequence, read N- to C-terminus: Bifunctional protein GlmU (457 aa).

Positions 1–229 (MDLAAVILAA…PVEVTGINDR (229 aa)) are pyrophosphorylase. UDP-N-acetyl-alpha-D-glucosamine contacts are provided by residues 8-11 (LAAG), Lys22, Gln72, and 77-78 (GT). A Mg(2+)-binding site is contributed by Asp102. Gly139, Glu154, Asn169, and Asn227 together coordinate UDP-N-acetyl-alpha-D-glucosamine. Asn227 is a binding site for Mg(2+). Residues 230-250 (RQLAEVEKYLRRRVLEDLMQS) form a linker region. The interval 251-457 (GVTVLDPAST…WAAKKRDKKV (207 aa)) is N-acetyltransferase. UDP-N-acetyl-alpha-D-glucosamine-binding residues include Arg332 and Lys350. Residue His362 is the Proton acceptor of the active site. 2 residues coordinate UDP-N-acetyl-alpha-D-glucosamine: Tyr365 and Asn376. Acetyl-CoA contacts are provided by residues 385–386 (NY), Ser404, Ala422, and Arg439.

It in the N-terminal section; belongs to the N-acetylglucosamine-1-phosphate uridyltransferase family. This sequence in the C-terminal section; belongs to the transferase hexapeptide repeat family. In terms of assembly, homotrimer. Requires Mg(2+) as cofactor.

It is found in the cytoplasm. It catalyses the reaction alpha-D-glucosamine 1-phosphate + acetyl-CoA = N-acetyl-alpha-D-glucosamine 1-phosphate + CoA + H(+). The catalysed reaction is N-acetyl-alpha-D-glucosamine 1-phosphate + UTP + H(+) = UDP-N-acetyl-alpha-D-glucosamine + diphosphate. Its pathway is nucleotide-sugar biosynthesis; UDP-N-acetyl-alpha-D-glucosamine biosynthesis; N-acetyl-alpha-D-glucosamine 1-phosphate from alpha-D-glucosamine 6-phosphate (route II): step 2/2. The protein operates within nucleotide-sugar biosynthesis; UDP-N-acetyl-alpha-D-glucosamine biosynthesis; UDP-N-acetyl-alpha-D-glucosamine from N-acetyl-alpha-D-glucosamine 1-phosphate: step 1/1. It participates in bacterial outer membrane biogenesis; LPS lipid A biosynthesis. Functionally, catalyzes the last two sequential reactions in the de novo biosynthetic pathway for UDP-N-acetylglucosamine (UDP-GlcNAc). The C-terminal domain catalyzes the transfer of acetyl group from acetyl coenzyme A to glucosamine-1-phosphate (GlcN-1-P) to produce N-acetylglucosamine-1-phosphate (GlcNAc-1-P), which is converted into UDP-GlcNAc by the transfer of uridine 5-monophosphate (from uridine 5-triphosphate), a reaction catalyzed by the N-terminal domain. This is Bifunctional protein GlmU from Pelotomaculum thermopropionicum (strain DSM 13744 / JCM 10971 / SI).